A 460-amino-acid polypeptide reads, in one-letter code: Keratin, type I cytoskeletal 27 (460 aa).

Positions 1–83 are head; that stretch reads MSVRFSSASR…GNEHGLLSGN (83 aa). The tract at residues 84–119 is coil 1A; it reads EKVTMQNLNDRLASYLDNVRALEEANADLEQKIKGW. Positions 84-399 constitute an IF rod domain; it reads EKVTMQNLND…RLIDGEDGSC (316 aa). A linker 1 region spans residues 120–141; that stretch reads YEKFGPGSCRGLDHDYSRYFTV. Positions 142 to 233 are coil 1B; sequence IDDLRNQIIS…KNHEEEMKAL (92 aa). The segment at 234 to 256 is linker 12; the sequence is QCAAGGNVNVEMNAAPGVDLTVL. The interval 257 to 395 is coil 2; sequence LNNMRAEYEA…ETYCRLIDGE (139 aa). The interval 396–460 is tail; that stretch reads DGSCAKSKGY…NVKSEQRVPS (65 aa). Residues 435–460 form a disordered region; that stretch reads LSSRVHSVEEKSTKVNNVKSEQRVPS. Residues 448 to 460 show a composition bias toward polar residues; the sequence is KVNNVKSEQRVPS.

The protein belongs to the intermediate filament family. Heterotetramer of two type I and two type II keratins. Interacts with KRT6A to form filaments.

Its subcellular location is the cytoplasm. In terms of biological role, essential for the proper assembly of type I and type II keratin protein complexes and formation of keratin intermediate filaments in the inner root sheath (irs). This Bos taurus (Bovine) protein is Keratin, type I cytoskeletal 27.